A 406-amino-acid chain; its full sequence is Argininosuccinate synthase (406 aa).

ATP is bound by residues 14 to 22 and Ala41; that span reads AYSGGLDTS. L-citrulline-binding residues include Tyr92 and Ser97. Gly122 is an ATP binding site. 3 residues coordinate L-aspartate: Thr124, Asn128, and Asp129. Residue Asn128 participates in L-citrulline binding. Arg132, Ser181, Ser190, Glu266, and Tyr278 together coordinate L-citrulline.

The protein belongs to the argininosuccinate synthase family. Type 1 subfamily. In terms of assembly, homotetramer.

The protein resides in the cytoplasm. The enzyme catalyses L-citrulline + L-aspartate + ATP = 2-(N(omega)-L-arginino)succinate + AMP + diphosphate + H(+). It functions in the pathway amino-acid biosynthesis; L-arginine biosynthesis; L-arginine from L-ornithine and carbamoyl phosphate: step 2/3. This Geobacter metallireducens (strain ATCC 53774 / DSM 7210 / GS-15) protein is Argininosuccinate synthase.